Here is a 643-residue protein sequence, read N- to C-terminus: 1-deoxy-D-xylulose-5-phosphate synthase (643 aa).

Residues H72 and 113–115 each bind thiamine diphosphate; that span reads GHA. Position 144 (D144) interacts with Mg(2+). Residues 145-146, N174, Y287, and E370 contribute to the thiamine diphosphate site; that span reads GA. N174 contacts Mg(2+).

It belongs to the transketolase family. DXPS subfamily. As to quaternary structure, homodimer. Mg(2+) serves as cofactor. It depends on thiamine diphosphate as a cofactor.

The catalysed reaction is D-glyceraldehyde 3-phosphate + pyruvate + H(+) = 1-deoxy-D-xylulose 5-phosphate + CO2. The protein operates within metabolic intermediate biosynthesis; 1-deoxy-D-xylulose 5-phosphate biosynthesis; 1-deoxy-D-xylulose 5-phosphate from D-glyceraldehyde 3-phosphate and pyruvate: step 1/1. Its function is as follows. Catalyzes the acyloin condensation reaction between C atoms 2 and 3 of pyruvate and glyceraldehyde 3-phosphate to yield 1-deoxy-D-xylulose-5-phosphate (DXP). The chain is 1-deoxy-D-xylulose-5-phosphate synthase from Prochlorococcus marinus (strain MIT 9211).